We begin with the raw amino-acid sequence, 692 residues long: Single-strand DNA endonuclease ASTE1 (692 aa).

This sequence belongs to the asteroid family.

In terms of biological role, structure-specific DNA endonuclease that specifically cleaves single-stranded DNA and 3' overhang DNA. The sequence is that of Single-strand DNA endonuclease ASTE1 (aste1a) from Danio rerio (Zebrafish).